A 1097-amino-acid polypeptide reads, in one-letter code: Error-prone DNA polymerase (1097 aa).

The disordered stretch occupies residues 1039-1097 (PTGRGDEFAHGSPGGGDSRDRSPPKPRDIVVPLCRARHKGIDPEPETMPSAFPKPRDFR). Positions 1055 to 1066 (DSRDRSPPKPRD) are enriched in basic and acidic residues.

Belongs to the DNA polymerase type-C family. DnaE2 subfamily.

Its subcellular location is the cytoplasm. The catalysed reaction is DNA(n) + a 2'-deoxyribonucleoside 5'-triphosphate = DNA(n+1) + diphosphate. DNA polymerase involved in damage-induced mutagenesis and translesion synthesis (TLS). It is not the major replicative DNA polymerase. In Allorhizobium ampelinum (strain ATCC BAA-846 / DSM 112012 / S4) (Agrobacterium vitis (strain S4)), this protein is Error-prone DNA polymerase.